The chain runs to 3674 residues: MSEVSSDEREDVQKKTFTKWINAQFSKFGKQHIENLFNDLQDGRRLLDLLEGLTGQKLPKEKGSTRVHALNNVNKALQVLQKNNVDLVNIGSTDIVDGNHKLTLGLIWNIILHWQVKNVMKNIMAGLQQTNSEKILLSWVRQSTRNYPQVNVINFTTSWSDGLALNALIHSHRPDLFDWNSVVCQQSATQRLEHAFNIAKYQLGIEKLLDPEDVATTYPDKKSILMYVTSLFQVLPQQVSIEAIQEVEMLPRPSKVTREEHFQLHHQMHYSQQITVCLAQGYERTPSPKPRFKSYAYTQAAYVTTSDPTRSPFPSQRLESPEDKSFGSSLLETEVNLDSYQTALEEVLSWLLSAEDTLQAQGEISNDVEEVKEQFHTHEGYMMDLTSHQGRIGSVLQLGSQLIGKGKLSEDEETEVQEQMNLLNSRWECLRVASVEKQSNLHKVLMDLQNQQLKELNDWLTKTEEKTRKMEKEPLGPDLEDLKHQIQQHKVLQEDLEQEQVRVNSLTHMVVVVDESSGDHATAALEEQLKVLGDRWANICRWTEDRWVLLQDILLKWQRFTEEQCLFSTWLSEKEDALNKIHTTGFKDQGEMLSSLQKLAVLKTDLEKKKQTMDKLSSLNQDLLSTLKNTLVAQKMEAWLDNFAQRWDNLVQKLEKSSTQISQAVTTTQPSLTQTTVMETVTMVTTREQILVKHAQEELPPPPPQKKRQIIVDSEIRKRLDVDITELHSWITRSEAVLQSPEFAIYRKEGNFSDLKEKVNAIEREKAEKFRKLQDASRSAQALVEQMVNEGVNADSIKQAAEQLNSRWIEFCQLLSERLNWLEYQNRIITFYNQLQQLEQITTAAENWLKTQPITTSEPTAVKSQLKICKDEVNRLSALQPQIERLKIESIALKEKGQGPMFLDADSVAFTNHFNQVFADMQAKEKELQIIFDTLPPMRYQETMSTILTWIQHSEAKLSIPQATVTEYEIMEQRLGELQALQSSLQEQQNGLNYLSTTVKEMSKKAPSNISRKYQSEFEEIEGRWKKLSAQLMEHCQKLEEQIAKLRKLQNHIKTLKNWMAEVDIFLKEEWPALGDSEILRKQLKQCRLLVSDIQTIQPSLNSVNEGGQKIKKEAEPEFASRLETELRELNTQWDYICRQVYARKEALKGGLDKTISLQKDLSEMHEWMTQAEEEYLERDFEYKTPDELQTAVEEMKRAKEEAQQKEAKVKLLTESVNSVIAQAPPAAQEALKKELDTLTTNYQWLCTRLNGKCKTLEEVWACWHELLSYLEKANKWLSEVEFKLKTTENIPGGAEEISEVLESLENLMQHSEDNPNQIRILAQTLTDGGVMDELINEELETFNSRWRELHEEAVRRQKLLEQSIQSAQEIEKSLHLIQDSLSSIDHQLAVYIADKVDAAQMPQEAQKIQSDLTSHEISLEEMKKHYQGKEAAPRVLSQIELAQKKLQDVSMKFRLFQKPANFEQRLQESKMILDEVKMHLPALEIKSVEQEVVQSQLNHCVNLYKSLSEVKSEVEMVIKTGRQIVQKKQTENPKELDERVTALKLHYNELGAKVTERKQQLEKCLKLSRKMRKEMNVLTEWLAATDTELTKRSAVEGMPSNLDSEVVWGKATQKEIEKQKFHLKSISEIGEALKMVLGKKETLVEDKLSLLNSNWIAVTSRAEEWLNLLLEYQKHMENFDQNVDHITKWIIQADTLLDESEKKKPQQKEDVLKRLKAEMNDMRPKVDSTRDQAANLMANRGDHCRKVIEPKISELNHRFAAISHRIKTGKASIPLKELEQFNSDIQKLLEPLEAEIQQGVNLKEEDFNKDMSEDNEGTVKELLQRGDNLQQRITDERKREEIKIKQQLLQTKHNALKDLRSQRRKKALEISHQWYQYKRQADDLLKCLDDIEKKLASLPEPQDEKKIKEIDRELQKKKEELDAVRRQAEGLSEDGAAMAVEPTQIQLSKRWREIESKFAHFRRLNFAQIHTVHEESVMVMTEDMPLEISYVPSAYLTEITHVSQALSEVEQLLNAPDLCAKDFEDLFKQEESLKNIKDSLQQISGRVDIIHNKKTAGLQSATPVERTRLQEALSQLDFQWERVNKMYKDRQGKFDRSVEKWRRFHYDMKIFNQWLTEAEHFLKKTQIPENWEHAKYKWYLKELQDGIGQRQTIVRVLNATGEEVIQQSSKTDASILQEKLGSLNLRWQEVCKQLAERKKRLEEQKNILSEFQRDLNEFVLWLEEADNITSVALEPGNEQQLKEKLEEIKLLAEELPLRQGTLKQLNETGGTVLVSAPISPEEQDKIENKLKQTNLQWIKVSRILPEKQGEIEAHIKDLGQFEEQLNHLLVWLSPIKNQLEIYNQPNQTGPFDIKETEVAVQAKQLDVEGILSKGQHLYKEKPATQPVKRKLEDLSSEWKAVTHLLQELRAKWPGPTPGLTTIEAPTSQTVTLVTQPTVTKETAISKPEMPSSLLLEVPALADFNRAWTELTDWLSLLDRVIKSQRVMVGDLEDINEMIIKQKATLQDLEQRRPQLEELITAAQNLKNKTSNQEARTIITDRIERIQSQWDEVQEHLQNRRQQLNEMLKDSTQWLEAKEEAEQVLGQARAKLESWKEGPYTMDAIQRKITETKQLAKDLRQWQINVDVANDLALKLLRDYSADDTRKVHMITENINASWANIHKRLSERETVLEETHRLLQQFPLDLEKFLAWLTEAETTANVLQDATHKERLLEDSKGVRELMKQWQDLQGEIEAHTDIYHNLDENGQKILRSLEGSDDAILLQRRLDNMNFKWSELRKKSLNIRSHLEASSDQWKRLHLSLQELLVWLQLKDDELSRQAPIGGDCPAVQKQNDVHRAFKRELKTKEPVIMSTLETVRIFLTEQPLEGLEKLYQEPRELPPEERAQNVTRLLRKQAEEVNTEWEKLNLHSADWQRKIDEALERLQELQEATDELDLKLRQAEVIKGSWQPVGDLLIDSLQDHLEKVKALRGEKAPLKENVSHVNDLARQLTTLGIQLSPYNLSTLEDLNTRWKLLQVAVEDRIRQLHEAHRDFGPASQHFLSTSVQGPWERAISPNKVPYYINHETQTTCWDHPKMTELYQSLADLNNVRFSAYRTAMKLRRLQKALCLDLLSLSAACDALDQHNLKQNDQPMDILQIINCLTTVYDRLEQEHNNLVNVPLCVDMCLNWLLNVYDTGRTGRIRVLSFKTGIVSLCKAHLEDKYRYLFKQVASSTGFCDQRRLGLLLHDSIQIPRQLGEVASFGGSNIEPSVRSCFQFANNKPEIEAALFLDWMRLEPQSMVWLPVLHRVAAAETAKHQAKCNICKECPIIGFRYRSLKHFNYDICQSCFFSGRVAKGHKMHYPMVEYCTPTTSGEDVRDFAKVLKNKFRTKRYFAKHPRMGYLPVQTVLEGDNMETPVTLINFWPVDSAPASSPQLSHDDTHSRIEHYASRLAEMENSNGSYLNDSISPNESIDDEHLLIQHYCQSLNQDSPLSQPRSPAQILISLESEERGELERILADLEEENRNLQAEYDRLKQQHEHKGLSPLPSPPEMMPTSPQSPRDAELIAEAKLLRQHKGRLEARMQTLEDHNKQLESQLHRLRQLLEQPQAEAKVNGTTVSSPSTSLQRSDSSQPMLLRVVGSQTSESMGEEDLLSPPQDTSTGLEEVMEQLNNSFPSSRGRNTPGKPVREDTM.

The interval M1–P236 is actin-binding. Calponin-homology (CH) domains lie at D11–Q115 and T130–P236. The tract at residues P59 to H68 is ANK2- and ANK-3 binding. Polar residues predominate over residues S306–L318. The tract at residues S306–S325 is disordered. Spectrin repeat units lie at residues V335–K443, V444–D552, L555–Q663, E715–Y824, N826–I930, R939–E1041, A1044–G1150, D1153–E1259, A1262–Q1363, S1364–K1459, E1464–K1564, K1567–E1672, K1675–I1774, P1775–E1870, H1873–E1975, E1988–R2097, E2100–E2204, N2207–A2314, H2315–K2412, F2464–E2566, K2569–E2675, R2678–A2791, K2797–D2919, and R2924–E3029. Residues S1411 to K1909 form an interaction with SYNM region. The region spanning T3044–M3077 is the WW domain. Positions Q3047 to T3397 are interaction with SYNM. The segment at K3297–T3353 adopts a ZZ-type; degenerate zinc-finger fold. Positions 3302, 3305, 3326, and 3329 each coordinate Zn(2+). Positions D3455–R3507 are binds to SNTB1. Residues S3472, S3479, and S3489 each carry the phosphoserine modification. Disordered stretches follow at residues K3517–R3543 and Q3590–M3674. Polar residues-rich tracts occupy residues N3596–P3615 and Q3651–R3662. 6 positions are modified to phosphoserine: S3601, S3602, S3606, S3612, S3613, and S3655.

As to quaternary structure, interacts with SYNM. Interacts with the syntrophins SNTG1 and SNTG2. Interacts with KRT19. Component of the dystrophin-associated glycoprotein complex which is composed of three subcomplexes: a cytoplasmic complex comprised of DMD (or UTRN), DTNA and a number of syntrophins, such as SNTB1, SNTB2, SNTG1 and SNTG2, the transmembrane dystroglycan complex, and the sarcoglycan-sarcospan complex. Interacts with DAG1 (betaDAG1) with DMD; the interaction is inhibited by phosphorylation on the PPXY motif of DAG1. Interacts with SYNM; SNTA1 and SNTB1. Interacts with CMYA5. Directly interacts with ANK2 and ANK3; these interactions do not interfere with betaDAG1-binding and are necessary for proper localization in muscle cells. Identified in a dystroglycan complex that contains at least PRX, DRP2, UTRN, DMD and DAG1. Interacts with DTNB. Interacts with PGM5; the interaction is direct. Interacts with NOS1; localizes NOS1 to sarcolemma in muscle cells. In terms of tissue distribution, in the retina, expressed in the outer plexiform layer (OPL) and around the blood vessels. Also observed at the vitreal border of the retina corresponding to the inner limiting membrane (ILM). Presynaptically localized in cone pedicles and postsynaptically in bipolar cells (at protein level).

The protein localises to the cell membrane. Its subcellular location is the sarcolemma. It localises to the cytoplasm. The protein resides in the cytoskeleton. It is found in the postsynaptic cell membrane. In terms of biological role, anchors the extracellular matrix to the cytoskeleton via F-actin. Ligand for dystroglycan. Component of the dystrophin-associated glycoprotein complex which accumulates at the neuromuscular junction (NMJ) and at a variety of synapses in the peripheral and central nervous systems and has a structural function in stabilizing the sarcolemma. Also implicated in signaling events and synaptic transmission. This is Dystrophin from Sus scrofa (Pig).